Here is a 402-residue protein sequence, read N- to C-terminus: Transcription regulatory protein OpdE (402 aa).

12 consecutive transmembrane segments (helical) span residues 22-42 (VLAI…PVSL), 60-80 (GIAI…SVAG), 86-106 (TLLL…ALAP), 108-128 (YFVY…FWSM), 147-167 (ALVN…GAWL), 170-190 (LIGW…ALAW), 220-240 (PGVM…FSLF), 256-276 (AHVS…TLLI), 296-316 (ALIA…VVLL), 318-338 (LWGL…ARVF), 348-368 (LFVA…GLLF), and 375-395 (ATFF…ILTA).

It to B.subtilis YwfA.

It is found in the cell membrane. In terms of biological role, regulates the expression of oprD which encodes the imipenem-specific porin. The protein is Transcription regulatory protein OpdE (opdE) of Pseudomonas aeruginosa (strain ATCC 15692 / DSM 22644 / CIP 104116 / JCM 14847 / LMG 12228 / 1C / PRS 101 / PAO1).